We begin with the raw amino-acid sequence, 739 residues long: Protein NPGR2 (739 aa).

The disordered stretch occupies residues 32–71 (EQMRHREEEDKKSEVGVGRDYNGSSALSTAESENAKKLDN). Over residues 33–45 (QMRHREEEDKKSE) the composition is skewed to basic and acidic residues. Residues 53 to 63 (NGSSALSTAES) show a composition bias toward polar residues. 9 TPR repeats span residues 90-127 (EEAR…KMKT), 162-195 (FEAI…VETS), 215-248 (TKAV…HWKL), 465-498 (PRVV…GAES), 500-533 (LEVW…TGKW), 536-569 (GKLL…LQVQ), 592-625 (LGTW…APYS), 626-659 (SVRY…DPMH), and 697-733 (HSAW…EETM).

Interacts with calmodulin in a calcium-dependent manner. Expressed in pollen, flowers and fruits.

This is Protein NPGR2 from Arabidopsis thaliana (Mouse-ear cress).